A 176-amino-acid chain; its full sequence is MVQVELDVQDCFLESSPEAAQASGYIDSQVSSATWEDWFHRWLEILDSSLPPAPSYEIGLRLTDDTEIQAINAQYRQQNKPTDVLAFAALEADLPQNPEMVAEPLYLGDIVVSINTAQRQAGQQEHSLSTELAWLTAHGLLHLLGWDHPDEESLIAMLQQQVVLLDAVGIKININY.

3 residues coordinate Zn(2+): H138, H142, and H148.

The protein belongs to the endoribonuclease YbeY family. It depends on Zn(2+) as a cofactor.

The protein localises to the cytoplasm. In terms of biological role, single strand-specific metallo-endoribonuclease involved in late-stage 70S ribosome quality control and in maturation of the 3' terminus of the 16S rRNA. This chain is Endoribonuclease YbeY, found in Trichormus variabilis (strain ATCC 29413 / PCC 7937) (Anabaena variabilis).